We begin with the raw amino-acid sequence, 38 residues long: Large ribosomal subunit protein bL36 (38 aa).

This sequence belongs to the bacterial ribosomal protein bL36 family.

In Streptococcus agalactiae serotype III (strain NEM316), this protein is Large ribosomal subunit protein bL36.